Consider the following 390-residue polypeptide: Magnesium-protoporphyrin IX monomethyl ester [oxidative] cyclase (390 aa).

This sequence belongs to the AcsF family. The cofactor is Fe cation.

The enzyme catalyses Mg-protoporphyrin IX 13-monomethyl ester + 3 NADPH + 3 O2 + 2 H(+) = 3,8-divinyl protochlorophyllide a + 3 NADP(+) + 5 H2O. It functions in the pathway porphyrin-containing compound metabolism; chlorophyll biosynthesis (light-independent). Catalyzes the formation of the isocyclic ring in chlorophyll biosynthesis. Mediates the cyclase reaction, which results in the formation of divinylprotochlorophyllide (Pchlide) characteristic of all chlorophylls from magnesium-protoporphyrin IX 13-monomethyl ester (MgPMME). This chain is Magnesium-protoporphyrin IX monomethyl ester [oxidative] cyclase, found in Prochlorococcus marinus subsp. pastoris (strain CCMP1986 / NIES-2087 / MED4).